A 249-amino-acid chain; its full sequence is MTSPSQVLPASAGKPTGPNADPKEIDKFSELAHHWWDPNSEFKPLHDLNPLRLGWIDGIAGLAGKKVVDIGCGGGILSESMARLGANVRGIDLSTKALRVADLHSLESGVAVNYEEIAAEALAAREPGSVDVVTCMEMLEHVPDPESIVQACATLVRPGGHVFVSTINRNLKAYLMAVVGAEYILQMLPRGTHDYEKFITPSEMARFARNAGLDLVEMRGMTYNPLSQIYSLSRDTDVNYMMAFRRVAE.

Positions 1-23 are disordered; it reads MTSPSQVLPASAGKPTGPNADPK. The S-adenosyl-L-methionine site is built by Arg-52, Gly-71, Asp-92, and Met-136.

Belongs to the methyltransferase superfamily. UbiG/COQ3 family.

It carries out the reaction a 3-demethylubiquinol + S-adenosyl-L-methionine = a ubiquinol + S-adenosyl-L-homocysteine + H(+). The catalysed reaction is a 3-(all-trans-polyprenyl)benzene-1,2-diol + S-adenosyl-L-methionine = a 2-methoxy-6-(all-trans-polyprenyl)phenol + S-adenosyl-L-homocysteine + H(+). The protein operates within cofactor biosynthesis; ubiquinone biosynthesis. In terms of biological role, O-methyltransferase that catalyzes the 2 O-methylation steps in the ubiquinone biosynthetic pathway. This is Ubiquinone biosynthesis O-methyltransferase from Cupriavidus pinatubonensis (strain JMP 134 / LMG 1197) (Cupriavidus necator (strain JMP 134)).